Reading from the N-terminus, the 205-residue chain is Outer-membrane lipoprotein LolB (205 aa).

The signal sequence occupies residues 1-17 (MFLRHFIVFSFIALLAG). Cys-18 carries N-palmitoyl cysteine lipidation. A lipid anchor (S-diacylglycerol cysteine) is attached at Cys-18.

This sequence belongs to the LolB family. As to quaternary structure, monomer.

It is found in the cell outer membrane. Plays a critical role in the incorporation of lipoproteins in the outer membrane after they are released by the LolA protein. The chain is Outer-membrane lipoprotein LolB from Pseudomonas fluorescens (strain ATCC BAA-477 / NRRL B-23932 / Pf-5).